A 408-amino-acid polypeptide reads, in one-letter code: 2-acyl-4-prenylphloroglucinol 6-prenyltransferase, chloroplastic (408 aa).

The transit peptide at 1 to 46 (MELSSACNLSLKPNYYYYPTSLFPSNNSYNNLKASSYYQTQRPIKC) directs the protein to the chloroplast. Helical transmembrane passes span 119 to 139 (PIPFVAVSIICTSLFGAELLK), 146 to 166 (WQLMFDAFQGLVVILLYHIYI), 193 to 213 (SVKSAWFLTIFSAVASLLLMI), 217 to 237 (CGLFLTCMYCCYLVIGAMYSV), 257 to 277 (IGIGINFLINYASRATLGLPF), 281 to 301 (PPFTFIIGFVSTLSIILSILK), 326 to 346 (IVLVGSGFFLLNYVAAIGVAI), 355 to 375 (YIMIPAHAIFASALIFKTWLL), and 388 to 408 (YYHFLWFLMIAEYILYPFIST).

Belongs to the UbiA prenyltransferase family. In terms of assembly, homo- and heteromer. Interacts with PT1L, forming a functional metabolon. It depends on Mg(2+) as a cofactor. As to expression, expressed in trichomes.

Its subcellular location is the plastid. The protein resides in the chloroplast membrane. It carries out the reaction a 2-acyl-4-prenylphloroglucinol + dimethylallyl diphosphate = a 2-acyl-4,6-diprenylphloroglucinol + diphosphate. The enzyme catalyses a 2-acyl-4,6-diprenylphloroglucinol + dimethylallyl diphosphate = a 2-acyl-4,6,6-triprenylphloroglucinol + diphosphate. Its pathway is secondary metabolite biosynthesis. Involved in the biosynthesis of prenylated phenolics natural products which contribute to the bitter taste of beer and display broad biological activities. Catalyzes the two last prenylation steps in the beta-bitter acid pathway. Uses dimethylallyl diphosphate (DMAPP) as the prenyl donor. The chain is 2-acyl-4-prenylphloroglucinol 6-prenyltransferase, chloroplastic from Humulus lupulus (European hop).